Here is a 191-residue protein sequence, read N- to C-terminus: Thymidine kinase (191 aa).

ATP-binding positions include 9-16 (GTMNSGKT) and 85-88 (DEAQ). The Proton acceptor role is filled by glutamate 86. The Zn(2+) site is built by cysteine 143, cysteine 146, cysteine 180, and histidine 183.

It belongs to the thymidine kinase family. As to quaternary structure, homotetramer.

Its subcellular location is the cytoplasm. The catalysed reaction is thymidine + ATP = dTMP + ADP + H(+). The sequence is that of Thymidine kinase from Streptococcus gordonii (strain Challis / ATCC 35105 / BCRC 15272 / CH1 / DL1 / V288).